Consider the following 508-residue polypeptide: Photosystem II CP47 reaction center protein (508 aa).

Helical transmembrane passes span 21–36 (SVHL…WAGS), 101–115 (IVLS…IWHW), 140–156 (GIHL…FGAF), 203–218 (IAAG…FHLS), 237–252 (VLSS…AFVV), and 457–472 (TFAL…HGAR).

This sequence belongs to the PsbB/PsbC family. PsbB subfamily. PSII is composed of 1 copy each of membrane proteins PsbA, PsbB, PsbC, PsbD, PsbE, PsbF, PsbH, PsbI, PsbJ, PsbK, PsbL, PsbM, PsbT, PsbX, PsbY, PsbZ, Psb30/Ycf12, at least 3 peripheral proteins of the oxygen-evolving complex and a large number of cofactors. It forms dimeric complexes. The cofactor is Binds multiple chlorophylls. PSII binds additional chlorophylls, carotenoids and specific lipids..

Its subcellular location is the plastid. It is found in the chloroplast thylakoid membrane. Functionally, one of the components of the core complex of photosystem II (PSII). It binds chlorophyll and helps catalyze the primary light-induced photochemical processes of PSII. PSII is a light-driven water:plastoquinone oxidoreductase, using light energy to abstract electrons from H(2)O, generating O(2) and a proton gradient subsequently used for ATP formation. The protein is Photosystem II CP47 reaction center protein of Angiopteris evecta (Mule's foot fern).